Reading from the N-terminus, the 274-residue chain is Large ribosomal subunit protein uL2cz/uL2cy (274 aa).

Disordered stretches follow at residues 1-22 and 225-274; these read MAIHLYKTSTPSTRNGAVDSQV and PVDH…RRSK.

This sequence belongs to the universal ribosomal protein uL2 family. In terms of assembly, part of the 50S ribosomal subunit.

The protein resides in the plastid. It is found in the chloroplast. This is Large ribosomal subunit protein uL2cz/uL2cy (rpl2-A) from Nasturtium officinale (Watercress).